The chain runs to 407 residues: Digeranylgeranylglycerophospholipid reductase (407 aa).

10 residues coordinate FAD: alanine 15, glutamate 34, cysteine 45, alanine 46, glycine 48, arginine 99, alanine 123, aspartate 281, glycine 293, and isoleucine 294.

The protein belongs to the geranylgeranyl reductase family. DGGGPL reductase subfamily. The cofactor is FAD.

It catalyses the reaction a 2,3-bis-O-phytanyl-sn-glycerol 1-phospholipid + 8 oxidized 2[4Fe-4S]-[ferredoxin] = a 2,3-bis-O-(geranylgeranyl)-sn-glycerol 1-phospholipid + 8 reduced 2[4Fe-4S]-[ferredoxin] + 16 H(+). The enzyme catalyses 2,3-bis-O-(phytanyl)-sn-glycerol 1-phosphate + 8 oxidized 2[4Fe-4S]-[ferredoxin] = 2,3-bis-O-(geranylgeranyl)-sn-glycerol 1-phosphate + 8 reduced 2[4Fe-4S]-[ferredoxin] + 16 H(+). It carries out the reaction a 2,3-bis-O-phytanyl-sn-glycerol 1-phospholipid + 8 A = a 2,3-bis-O-(geranylgeranyl)-sn-glycerol 1-phospholipid + 8 AH2. The catalysed reaction is CDP-2,3-bis-O-(geranylgeranyl)-sn-glycerol + 8 AH2 = CDP-2,3-bis-O-(phytanyl)-sn-glycerol + 8 A. It catalyses the reaction archaetidylserine + 8 AH2 = 2,3-bis-O-phytanyl-sn-glycero-3-phospho-L-serine + 8 A. It participates in membrane lipid metabolism; glycerophospholipid metabolism. Functionally, is involved in the reduction of 2,3-digeranylgeranylglycerophospholipids (unsaturated archaeols) into 2,3-diphytanylglycerophospholipids (saturated archaeols) in the biosynthesis of archaeal membrane lipids. Catalyzes the formation of archaetidic acid (2,3-di-O-phytanyl-sn-glyceryl phosphate) from 2,3-di-O-geranylgeranylglyceryl phosphate (DGGGP) via the hydrogenation of each double bond of the isoprenoid chains. Requires the adjacently encoded ferredoxin MA_1485 as the electron donor. Is also probably able to reduce double bonds of geranyl groups in CDP-2,3-bis-O-(geranylgeranyl)-sn-glycerol and archaetidylserine, thus acting at various stages in the biosynthesis of archaeal membrane lipids. In Methanosarcina acetivorans (strain ATCC 35395 / DSM 2834 / JCM 12185 / C2A), this protein is Digeranylgeranylglycerophospholipid reductase.